A 602-amino-acid polypeptide reads, in one-letter code: Elongation factor 4 (602 aa).

The region spanning Ser7 to Gln189 is the tr-type G domain. GTP-binding positions include Asp19–Thr24 and Asn136–Asp139.

This sequence belongs to the TRAFAC class translation factor GTPase superfamily. Classic translation factor GTPase family. LepA subfamily.

It localises to the cell inner membrane. It catalyses the reaction GTP + H2O = GDP + phosphate + H(+). In terms of biological role, required for accurate and efficient protein synthesis under certain stress conditions. May act as a fidelity factor of the translation reaction, by catalyzing a one-codon backward translocation of tRNAs on improperly translocated ribosomes. Back-translocation proceeds from a post-translocation (POST) complex to a pre-translocation (PRE) complex, thus giving elongation factor G a second chance to translocate the tRNAs correctly. Binds to ribosomes in a GTP-dependent manner. The sequence is that of Elongation factor 4 from Prochlorococcus marinus (strain MIT 9312).